A 906-amino-acid polypeptide reads, in one-letter code: MCRIAGAPRTLLPLLAALLQASVEASGEIALCKTGFPEDVYSAVLSKDVHEGQPLLNVKFSNCNGKRKVQYESSEPADFKVDEDGMVYAVRSFPLSSEHAKFLIYAQDKETQEKWQVAVKLSLKPTLPEESVKESTEVEEIVFPRQLGKHSGHLQRQKRDWVIPPINLPENSRGPFPQELVRIRSDRDKNLSLRYSVTGPGADQPPTGIFIINPISGQLSVTKPLDREQIARFHLRAHAVDINGNQVENPIDIVINVIDMNDNRPEFLHQVWNGTVPEGSKPGTYVMTVTAIDADDPNALNGMLRYRILSQAPSTPSPNMFTINNETGDIITVAAGLDREKVQQYTLIIQATDMEGNPTYGLSNTATAIITVTDVNDNPPEFTAMTFYGEVPENRVDVIVANLTVTDKDQPHTPAWNAVYRISGGDPTGRFAIQTDPNSNDGLVTVVKPIDFETNRMFVLTVAAENQVPLAKGIQHPPQSTATVSVTVIDVNENPYFAPNPKIIRQEEGLHAGTMLTTFTAQDPDRYMQQNIRYTKLSDPANWLKIDPVNGQITTIAILDRESPNVKNNIYNATFLASDNGIPPMSGTGTLQIYLLDINDNAPQVLPQEAETCETPDPNSINITALDYDIDPNAGPFAFDLPLSPVNIKRNWTITRLNGDFAQLNLKIKFLEAGIYEVPIIITDSGNPPKSNISILRVKVCQCDSNGDCTDVDRIVGAGLGTGAIIAILLCIIILLILVLMFVVWMKRRDKERQAKQLLIDPEDDVRDNILKYDEEGGGEEDQDYDLSQLQQPDTVEPDAIKPVGIRRMDERPIHAEPQYPVRSAAPHPGDIGDFINEGLKAADNDPTAPPYDSLLVFDYEGSGSTAGSLSSLNSSSSGGEQDYDYLNDWGPRFKKLADMYGGGDD.

The signal sequence occupies residues 1–25; sequence MCRIAGAPRTLLPLLAALLQASVEA. The propeptide occupies 26–159; the sequence is SGEIALCKTG…HSGHLQRQKR (134 aa). Serine 96 and serine 135 each carry phosphoserine. Cadherin domains are found at residues 160 to 267, 268 to 382, 383 to 497, 498 to 603, and 604 to 714; these read DWVI…RPEF, LHQV…PPEF, TAMT…NPYF, APNP…DNAP, and QVLP…DVDR. Topologically, residues 160–724 are extracellular; the sequence is DWVIPPINLP…IVGAGLGTGA (565 aa). Glutamate 170 is a binding site for Ca(2+). The N-linked (GlcNAc...) asparagine glycan is linked to asparagine 190. Aspartate 226, glutamate 228, aspartate 259, methionine 260, asparagine 261, aspartate 262, and asparagine 263 together coordinate Ca(2+). The N-linked (GlcNAc...) asparagine glycan is linked to asparagine 273. The Ca(2+) site is built by aspartate 293, aspartate 295, and asparagine 301. Residue asparagine 325 is glycosylated (N-linked (GlcNAc...) asparagine). Position 353 (aspartate 353) interacts with Ca(2+). N-linked (GlcNAc...) asparagine glycans are attached at residues asparagine 402, asparagine 572, asparagine 622, asparagine 651, and asparagine 692. Residues 725-745 form a helical membrane-spanning segment; the sequence is IIAILLCIIILLILVLMFVVW. At 746 to 906 the chain is on the cytoplasmic side; sequence MKRRDKERQA…LADMYGGGDD (161 aa). Low complexity predominate over residues 863-880; it reads SGSTAGSLSSLNSSSSGG. The disordered stretch occupies residues 863 to 884; that stretch reads SGSTAGSLSSLNSSSSGGEQDY.

As to quaternary structure, homodimer (via extracellular region). Can also form heterodimers with other cadherins (via extracellular region). Dimerization occurs in trans, i.e. with a cadherin chain from another cell. Interacts with CDCP1. Interacts with PCDH8; this complex may also include TAOK2. The interaction with PCDH8 may lead to internalization through TAOK2/p38 MAPK pathway. Identified in a complex containing FGFR4, NCAM1, CDH2, PLCG1, FRS2, SRC, SHC1, GAP43 and CTTN. May interact with OBSCN (via protein kinase domain 2). Interacts with FBXO45. Cleaved by MMP24. Ectodomain cleavage leads to the generation of a soluble 90 kDa N-terminal soluble fragment and a 45 kDa membrane-bound C-terminal fragment 1 (CTF1), which is further cleaved by gamma-secretase into a 35 kDa. Cleavage in neural stem cells by MMP24 affects CDH2-mediated anchorage of neural stem cells to ependymocytes in the adult subependymal zone, leading to modulate neural stem cell quiescence.

The protein localises to the cell membrane. The protein resides in the sarcolemma. Its subcellular location is the cell junction. It is found in the cell surface. It localises to the desmosome. The protein localises to the adherens junction. Functionally, calcium-dependent cell adhesion protein; preferentially mediates homotypic cell-cell adhesion by dimerization with a CDH2 chain from another cell. Cadherins may thus contribute to the sorting of heterogeneous cell types. Acts as a regulator of neural stem cells quiescence by mediating anchorage of neural stem cells to ependymocytes in the adult subependymal zone: upon cleavage by MMP24, CDH2-mediated anchorage is affected, leading to modulate neural stem cell quiescence. Plays a role in cell-to-cell junction formation between pancreatic beta cells and neural crest stem (NCS) cells, promoting the formation of processes by NCS cells. Required for proper neurite branching. Required for pre- and postsynaptic organization. CDH2 may be involved in neuronal recognition mechanism. In hippocampal neurons, may regulate dendritic spine density. This chain is Cadherin-2 (CDH2), found in Callithrix jacchus (White-tufted-ear marmoset).